The chain runs to 169 residues: Ureidoglycolate lyase (169 aa).

This sequence belongs to the ureidoglycolate lyase family. As to quaternary structure, homodimer. Ni(2+) is required as a cofactor.

It carries out the reaction (S)-ureidoglycolate = urea + glyoxylate. Its pathway is nitrogen metabolism; (S)-allantoin degradation. In terms of biological role, catalyzes the catabolism of the allantoin degradation intermediate (S)-ureidoglycolate, generating urea and glyoxylate. Involved in the utilization of allantoin as nitrogen source. The protein is Ureidoglycolate lyase of Pseudomonas paraeruginosa (strain DSM 24068 / PA7) (Pseudomonas aeruginosa (strain PA7)).